A 119-amino-acid polypeptide reads, in one-letter code: Flagellar transcriptional regulator FlhD (119 aa).

This sequence belongs to the FlhD family. Homodimer; disulfide-linked. Forms a heterohexamer composed of two FlhC and four FlhD subunits. Each FlhC binds a FlhD dimer, forming a heterotrimer, and a hexamer assembles by dimerization of two heterotrimers.

The protein resides in the cytoplasm. Its function is as follows. Functions in complex with FlhC as a master transcriptional regulator that regulates transcription of several flagellar and non-flagellar operons by binding to their promoter region. Activates expression of class 2 flagellar genes, including fliA, which is a flagellum-specific sigma factor that turns on the class 3 genes. Also regulates genes whose products function in a variety of physiological pathways. The sequence is that of Flagellar transcriptional regulator FlhD from Pectobacterium atrosepticum (strain SCRI 1043 / ATCC BAA-672) (Erwinia carotovora subsp. atroseptica).